A 386-amino-acid polypeptide reads, in one-letter code: Lipoyl synthase, mitochondrial (386 aa).

Residues C110, C115, C121, C141, C145, C148, and S356 each coordinate [4Fe-4S] cluster. The Radical SAM core domain maps to 124 to 345 (GNDKSKATAT…KEQALEMGFL (222 aa)).

This sequence belongs to the radical SAM superfamily. Lipoyl synthase family. [4Fe-4S] cluster serves as cofactor.

The protein resides in the mitochondrion. The enzyme catalyses [[Fe-S] cluster scaffold protein carrying a second [4Fe-4S](2+) cluster] + N(6)-octanoyl-L-lysyl-[protein] + 2 oxidized [2Fe-2S]-[ferredoxin] + 2 S-adenosyl-L-methionine + 4 H(+) = [[Fe-S] cluster scaffold protein] + N(6)-[(R)-dihydrolipoyl]-L-lysyl-[protein] + 4 Fe(3+) + 2 hydrogen sulfide + 2 5'-deoxyadenosine + 2 L-methionine + 2 reduced [2Fe-2S]-[ferredoxin]. It participates in protein modification; protein lipoylation via endogenous pathway; protein N(6)-(lipoyl)lysine from octanoyl-[acyl-carrier-protein]: step 2/2. Its function is as follows. Catalyzes the radical-mediated insertion of two sulfur atoms into the C-6 and C-8 positions of the octanoyl moiety bound to the lipoyl domains of lipoate-dependent enzymes, thereby converting the octanoylated domains into lipoylated derivatives. This is Lipoyl synthase, mitochondrial from Zygosaccharomyces rouxii (strain ATCC 2623 / CBS 732 / NBRC 1130 / NCYC 568 / NRRL Y-229).